The following is a 141-amino-acid chain: Large ribosomal subunit protein uL22 (141 aa).

This sequence belongs to the universal ribosomal protein uL22 family. Part of the 50S ribosomal subunit.

In terms of biological role, this protein binds specifically to 23S rRNA; its binding is stimulated by other ribosomal proteins, e.g. L4, L17, and L20. It is important during the early stages of 50S assembly. It makes multiple contacts with different domains of the 23S rRNA in the assembled 50S subunit and ribosome. The globular domain of the protein is located near the polypeptide exit tunnel on the outside of the subunit, while an extended beta-hairpin is found that lines the wall of the exit tunnel in the center of the 70S ribosome. The chain is Large ribosomal subunit protein uL22 from Frankia casuarinae (strain DSM 45818 / CECT 9043 / HFP020203 / CcI3).